We begin with the raw amino-acid sequence, 353 residues long: MKTMLAAYLPGNSTVDLREVAVPTPGINQVLIKMKSSGICGSDVHYIYHQHRATAAAPDKPLYQGFINGHEPCGQIVAMGQGCRHFKEGDRVLVYHISGCGFCPNCRRGFPISCTGEGKAAYGWQRDGGHAEYLLAEEKDLILLPDALSYEDGAFISCGVGTAYEGILRGEVSGSDNVLVVGLGPVGMMAMMLAKGRGAKRIIGVDMLPERLAMAKQLGVMDHGYLATTEGLPQIIAELTHGGADVALDCSGNAAGRLLALQSTADWGRVVYIGETGKVEFEVSADLMHHQRRIIGSWVTSLFHMEKCAHDLTDWKLWPRNAITHRFSLEQAGDAYALMASGKCGKVVINFPD.

The Zn(2+) site is built by C40, H70, C100, C103, C106, C114, and C158.

It belongs to the zinc-containing alcohol dehydrogenase family. Zn(2+) is required as a cofactor.

This is an uncharacterized protein from Escherichia coli (strain K12).